We begin with the raw amino-acid sequence, 398 residues long: Acetate kinase 2 (398 aa).

Position 7 (Asn7) interacts with Mg(2+). Lys14 lines the ATP pocket. Arg91 is a substrate binding site. Asp148 acts as the Proton donor/acceptor in catalysis. ATP contacts are provided by residues 208–212 (HLGNG), 283–285 (DFR), and 331–335 (GVGEN). Glu384 contributes to the Mg(2+) binding site.

It belongs to the acetokinase family. In terms of assembly, homodimer. Mg(2+) serves as cofactor. The cofactor is Mn(2+).

It localises to the cytoplasm. The catalysed reaction is acetate + ATP = acetyl phosphate + ADP. It functions in the pathway metabolic intermediate biosynthesis; acetyl-CoA biosynthesis; acetyl-CoA from acetate: step 1/2. Its function is as follows. Catalyzes the formation of acetyl phosphate from acetate and ATP. Can also catalyze the reverse reaction. The protein is Acetate kinase 2 of Clostridium perfringens (strain 13 / Type A).